Consider the following 402-residue polypeptide: NADH-quinone oxidoreductase subunit D (402 aa).

It belongs to the complex I 49 kDa subunit family. NDH-1 is composed of 14 different subunits. Subunits NuoB, C, D, E, F, and G constitute the peripheral sector of the complex.

Its subcellular location is the cell inner membrane. The catalysed reaction is a quinone + NADH + 5 H(+)(in) = a quinol + NAD(+) + 4 H(+)(out). In terms of biological role, NDH-1 shuttles electrons from NADH, via FMN and iron-sulfur (Fe-S) centers, to quinones in the respiratory chain. The immediate electron acceptor for the enzyme in this species is believed to be ubiquinone. Couples the redox reaction to proton translocation (for every two electrons transferred, four hydrogen ions are translocated across the cytoplasmic membrane), and thus conserves the redox energy in a proton gradient. In Rhodopseudomonas palustris (strain TIE-1), this protein is NADH-quinone oxidoreductase subunit D.